The sequence spans 113 residues: MPVFLGLPVLARFIGWLAGALIAYVAKFFTLGIARIALAISLFLGLIIGLNGLLVSYLSDLTSVLPPEIASAVSYVVPANAAPCLYAIFSLKAAVFIFDVKDRIIGYLDWNKS.

Transmembrane regions (helical) follow at residues 13 to 33 (FIGW…TLGI), 36 to 56 (IALA…LLVS), and 69 to 89 (IASA…YAIF).

Belongs to the inovirus G6P protein family. As to quaternary structure, interacts with G3P; this interaction is required for proper integration of G3P and G6P into the virion.

It is found in the virion. Its subcellular location is the host membrane. Functionally, plays essential roles both in the entry of the viral genome into the bacterial host and in budding process. The formation of the G3P-G6P complex termed adsorption complex is essential for correct termination of filamentous phage assembly. This chain is Head virion protein G6P (VI), found in Escherichia phage If1 (Bacteriophage If1).